A 315-amino-acid chain; its full sequence is Diacylglycerol kinase (315 aa).

In terms of domain architecture, DAGKc spans 1 to 132; that stretch reads MRKRARIIYN…VDIGKMNNRY (132 aa). ATP-binding positions include 10–14, threonine 41, 67–73, and threonine 94; these read NPTSG and GDGTLNE. 3 residues coordinate Mg(2+): lysine 213, aspartate 216, and tyrosine 218. The active-site Proton acceptor is glutamate 273.

This sequence belongs to the diacylglycerol/lipid kinase family. In terms of assembly, homodimer. The cofactor is Mg(2+).

It carries out the reaction a 1,2-diacyl-sn-glycerol + ATP = a 1,2-diacyl-sn-glycero-3-phosphate + ADP + H(+). In terms of biological role, catalyzes the phosphorylation of diacylglycerol (DAG) into phosphatidic acid. Is a key enzyme involved in the production of lipoteichoic acid by reintroducing DAG formed from the breakdown of membrane phospholipids into the phosphatidylglycerol biosynthetic pathway. The sequence is that of Diacylglycerol kinase (dagK) from Staphylococcus aureus (strain bovine RF122 / ET3-1).